The chain runs to 179 residues: MYEYLDRRYALALYEVAEENNKVDEYLRDLKEVVNIIKNSEDICKILKHPEINTSRKKEIFTELFKDKVDNKILSFLLVLIEKDRILYLEEKLKEMEKIYLEKNNMILANIKTVIPLLKEEREELIEKLGNKYNKKIILEEEIDKSIIGGVYVRVGDDVLDGTLSTRLKDIKKMMLKRE.

Belongs to the ATPase delta chain family. As to quaternary structure, F-type ATPases have 2 components, F(1) - the catalytic core - and F(0) - the membrane proton channel. F(1) has five subunits: alpha(3), beta(3), gamma(1), delta(1), epsilon(1). F(0) has three main subunits: a(1), b(2) and c(10-14). The alpha and beta chains form an alternating ring which encloses part of the gamma chain. F(1) is attached to F(0) by a central stalk formed by the gamma and epsilon chains, while a peripheral stalk is formed by the delta and b chains.

The protein resides in the cell membrane. In terms of biological role, f(1)F(0) ATP synthase produces ATP from ADP in the presence of a proton or sodium gradient. F-type ATPases consist of two structural domains, F(1) containing the extramembraneous catalytic core and F(0) containing the membrane proton channel, linked together by a central stalk and a peripheral stalk. During catalysis, ATP synthesis in the catalytic domain of F(1) is coupled via a rotary mechanism of the central stalk subunits to proton translocation. Functionally, this protein is part of the stalk that links CF(0) to CF(1). It either transmits conformational changes from CF(0) to CF(1) or is implicated in proton conduction. This Clostridium botulinum (strain Kyoto / Type A2) protein is ATP synthase subunit delta.